Consider the following 74-residue polypeptide: Homeobox protein H40 (74 aa).

The segment at residues 8–67 (ARRARTAFTYEQLVALENKFKTTRYLSVCERLNLALSLSLTETQVKIWFQNRRTKWKKQN) is a DNA-binding region (homeobox).

The protein localises to the nucleus. The polypeptide is Homeobox protein H40 (Apis mellifera (Honeybee)).